The following is a 37-amino-acid chain: MSDIN-like toxin proprotein 5 (37 aa).

The propeptide occupies 1 to 10 (MSDINATRLP). Positions 11 to 20 (LFFPPDFRPP) form a cross-link, cyclopeptide (Leu-Pro). A propeptide spanning residues 21-37 (CVGDADNFTLTRGENLC) is cleaved from the precursor.

The protein belongs to the MSDIN fungal toxin family. Processed by the macrocyclase-peptidase enzyme POPB to yield a toxic cyclic decapeptide. POPB first removes 10 residues from the N-terminus. Conformational trapping of the remaining peptide forces the enzyme to release this intermediate rather than proceed to macrocyclization. The enzyme rebinds the remaining peptide in a different conformation and catalyzes macrocyclization of the N-terminal 10 residues. Expressed in basidiocarps.

Its function is as follows. Probable toxin that belongs to the MSDIN-like toxin family responsible for a large number of food poisoning cases and deaths. This Amanita exitialis (Guangzhou destroying angel) protein is MSDIN-like toxin proprotein 5.